A 704-amino-acid chain; its full sequence is Elongation factor G 1 (704 aa).

The tr-type G domain occupies 8-291; it reads ERYRNIGISA…AVIDYLPSPA (284 aa). GTP contacts are provided by residues 17–24, 88–92, and 142–145; these read AHIDAGKT, DTPGH, and NKMD.

It belongs to the TRAFAC class translation factor GTPase superfamily. Classic translation factor GTPase family. EF-G/EF-2 subfamily.

The protein resides in the cytoplasm. Catalyzes the GTP-dependent ribosomal translocation step during translation elongation. During this step, the ribosome changes from the pre-translocational (PRE) to the post-translocational (POST) state as the newly formed A-site-bound peptidyl-tRNA and P-site-bound deacylated tRNA move to the P and E sites, respectively. Catalyzes the coordinated movement of the two tRNA molecules, the mRNA and conformational changes in the ribosome. This is Elongation factor G 1 from Burkholderia pseudomallei (strain 1710b).